A 352-amino-acid polypeptide reads, in one-letter code: Putative squamosa promoter-binding-like protein 19 (352 aa).

The segment at 68–88 is disordered; it reads AAAPATRRARGGSGGGGGGGG. Positions 78–88 are enriched in gly residues; it reads GGSGGGGGGGG. The SBP-type zinc finger occupies 90–167; that stretch reads AEACSVDGCR…DGHNRRRRKP (78 aa). Residues Cys-93, Cys-98, Cys-115, His-118, Cys-134, Cys-137, His-141, and Cys-153 each coordinate Zn(2+). The Bipartite nuclear localization signal signature appears at 150 to 166; the sequence is KKSCRKRLDGHNRRRRK. The segment at 152–174 is disordered; that stretch reads SCRKRLDGHNRRRRKPQHDALNP.

It is found in the nucleus. In terms of biological role, trans-acting factor that binds specifically to the consensus nucleotide sequence 5'-TNCGTACAA-3'. This Oryza sativa subsp. japonica (Rice) protein is Putative squamosa promoter-binding-like protein 19 (SPL19).